Here is a 60-residue protein sequence, read N- to C-terminus: Large ribosomal subunit protein bL33 (60 aa).

This sequence belongs to the bacterial ribosomal protein bL33 family.

This is Large ribosomal subunit protein bL33 from Flavobacterium johnsoniae (strain ATCC 17061 / DSM 2064 / JCM 8514 / BCRC 14874 / CCUG 350202 / NBRC 14942 / NCIMB 11054 / UW101) (Cytophaga johnsonae).